The following is a 564-amino-acid chain: Efflux pump hmp6 (564 aa).

The segment covering 1 to 25 (MEKHAEPEKSLGDKEFQEKELHEKP) has biased composition (basic and acidic residues). Residues 1 to 46 (MEKHAEPEKSLGDKEFQEKELHEKPAPAASEDISGDSSVNKEDGPD) form a disordered region. Transmembrane regions (helical) follow at residues 58-78 (LAVVMFALCISNFLVALDTTI), 96-118 (VGWYTSSYLLTNCAFQLFYGKLY), 125-145 (IVFTVAMIIFEIGSLLCGVAP), 156-176 (IAGLGSAGAFSGALIIVIHSV), 186-206 (GMIVGMYGLASVAAPLIGGAF), 214-234 (WCFYINLPCGGVAIAGLLFFF), 259-279 (FGTFFFLCSMICLLLALQMGG), and 289-309 (IIVLLVLFGLLLVAFIVVQFF). N-linked (GlcNAc...) asparagine glycans are attached at residues Asn-312 and Asn-322. 4 helical membrane-spanning segments follow: residues 330 to 350 (IYMFCVGAQFLVLVTFMPIWF), 361 to 383 (SGIRSLPILLSNTFCVVLAGALV), 395 to 415 (ASVVLTSIGAGLLTTLTVDAS), and 452 to 472 (IGTAVMVFVQLLGGTILVSAA).

It belongs to the major facilitator superfamily. TCR/Tet family.

The protein resides in the cell membrane. Efflux pump that might be required for efficient secretion of hypothemycin or other secondary metabolies produced by the hypothemycin gene cluster. The protein is Efflux pump hmp6 of Hypomyces subiculosus (Nectria subiculosa).